The following is a 1513-amino-acid chain: Protein tincar (1513 aa).

Over 1 to 77 (MGGKHQGSGA…DSGSYLHLNS (77 aa)) the chain is Cytoplasmic. The chain crosses the membrane as a helical span at residues 78–98 (LWSIWYGVMLTLFQGYLAMHG). Residues 99 to 120 (AYRFLGCSLIPWKIEPVAELNL) are Extracellular-facing. Residues 121–141 (QIVLSGVVFILLPVFFTSAVF) form a helical membrane-spanning segment. Residues 142-181 (KVGNLANDGIKLATGARERRCTLSPHDGLEEESRGGTLRA) are Cytoplasmic-facing. Residues 182-202 (LWTHGGPTAAFVHIVIALCLL) form a helical membrane-spanning segment. Topologically, residues 203-668 (LPRLLLEARI…VAIFSQPPSA (466 aa)) are extracellular. 3 disordered regions span residues 247 to 266 (TPFP…HQHG), 354 to 373 (ERQE…DEGV), and 383 to 532 (MPDF…SIHR). A compositionally biased stretch (low complexity) spans 427–466 (ASSSSSSTTSTTTTTTTSTTTTAATTTSTRGTSTTTTTTT). The span at 478–507 (SAHHHHGKSRKHHKHHNKQRQQQPPRRHHV) shows a compositional bias: basic residues. Residues 523 to 532 (TTTRDSSIHR) are compositionally biased toward basic and acidic residues. The helical transmembrane segment at 669 to 689 (EFVNLLCALLVWSVRYPAVFW) threads the bilayer. The Cytoplasmic portion of the chain corresponds to 690 to 696 (NTSKAFA). A helical transmembrane segment spans residues 697–717 (CVFSLQMVVAALDIILGYVGI). Topologically, residues 718–736 (SNLYKLQIYAEAMPVHQPG) are extracellular. Residues 737 to 757 (LILNAVVTLALYLLSTALVLA) form a helical membrane-spanning segment. Over 758–787 (SSMVMYLYGHGRLATRMRDRSIITLKTHQT) the chain is Cytoplasmic. The chain crosses the membrane as a helical span at residues 788–808 (WIYFAHCASLCFVLALAVVKA). The Extracellular portion of the chain corresponds to 809 to 826 (PLLNDLSATYKNNLHCPT). A helical membrane pass occupies residues 827–847 (FLAALVGVTHLLLWIVIWLCL). At 848-1513 (TIKRRWHFKL…CGLYVTAQLH (666 aa)) the chain is on the cytoplasmic side. Composition is skewed to low complexity over residues 879-903 (SSGQ…VNGG) and 1060-1071 (QQQQQQQQQQRQ). Disordered stretches follow at residues 879 to 913 (SSGQ…MSTA), 1045 to 1090 (EYDE…SGLG), 1115 to 1155 (ASTS…HSAG), 1173 to 1214 (EHHH…PHQH), and 1231 to 1335 (AHIA…DPAA). Pro residues predominate over residues 1122–1149 (PPQPSAQAPPPPPPLPIKGAPVPQPPAV). Composition is skewed to low complexity over residues 1179–1208 (LQHS…LQQQ) and 1255–1285 (TPRS…SGVH). Over residues 1286–1296 (SGEERELEVII) the composition is skewed to basic and acidic residues. Residues 1303–1314 (KPPPRPPQPPIQ) show a composition bias toward pro residues. The segment covering 1324–1335 (MRMSSFNADPAA) has biased composition (polar residues).

As to expression, expression varies in tissues throughout development. At stage 5, expressed in the embryo dorsal region followed by expression in a striped pattern at stage 6. During gastrulation, expressed in ventral region and ventral nerve cord. Also detected in many neurons in the externa sensilla and chordotonal organ. At stage 16, expressed on the surface of the midgut. Additionally, expressed in a subset of cardioblasts (Tin+ subpopulation) during dorsal vessel formation. In third-instar larval tissues, expressed in the eye and antennal disks. In the antennal disks, expressed in the second antennal segments. In the eye disks, strongest expression found in the ocelli, and in the differentiating ommatidial cells. Also expressed in all cells within and in the vicinity of the morphogenetic furrow.

Its subcellular location is the membrane. In terms of biological role, involved in eye morphogenesis. May be essential for the normal differentiation of ommatidial cells. This chain is Protein tincar (tinc), found in Drosophila melanogaster (Fruit fly).